The primary structure comprises 193 residues: Frataxin, mitochondrial (193 aa).

The transit peptide at 1-72 (MIFNFLNKAS…KQQQQLSKSF (72 aa)) directs the protein to the mitochondrion.

This sequence belongs to the frataxin family. In terms of assembly, monomer. Oligomer.

It localises to the mitochondrion. The catalysed reaction is 4 Fe(2+) + O2 + 4 H(+) = 4 Fe(3+) + 2 H2O. Functionally, promotes the biosynthesis of heme as well as the assembly and repair of iron-sulfur clusters by delivering Fe(2+) to proteins involved in these pathways. May play a role in the protection against iron-catalyzed oxidative stress through its ability to catalyze the oxidation of Fe(2+) to Fe(3+). May be able to store large amounts of the metal in the form of a ferrihydrite mineral by oligomerization. The polypeptide is Frataxin, mitochondrial (fxn) (Dictyostelium discoideum (Social amoeba)).